The sequence spans 338 residues: Phenylalanine--tRNA ligase alpha subunit (338 aa).

E253 is a Mg(2+) binding site.

This sequence belongs to the class-II aminoacyl-tRNA synthetase family. Phe-tRNA synthetase alpha subunit type 1 subfamily. In terms of assembly, tetramer of two alpha and two beta subunits. Mg(2+) is required as a cofactor.

Its subcellular location is the cytoplasm. The catalysed reaction is tRNA(Phe) + L-phenylalanine + ATP = L-phenylalanyl-tRNA(Phe) + AMP + diphosphate + H(+). The polypeptide is Phenylalanine--tRNA ligase alpha subunit (Legionella pneumophila (strain Paris)).